A 146-amino-acid chain; its full sequence is Large ribosomal subunit protein uL15 (146 aa).

Residues 1–46 form a disordered region; it reads MAIELHDLKPAPGAHKAKTRVGRGEGSKGKTAGRGTKGTGARKNVP. Positions 29–43 are enriched in low complexity; that stretch reads GKTAGRGTKGTGARK.

The protein belongs to the universal ribosomal protein uL15 family. As to quaternary structure, part of the 50S ribosomal subunit.

Functionally, binds to the 23S rRNA. The protein is Large ribosomal subunit protein uL15 of Cutibacterium acnes (strain DSM 16379 / KPA171202) (Propionibacterium acnes).